The following is a 167-amino-acid chain: MEVEVGQIVNTHGIKGEVKVKSNSDFTETRFQPGEQLLVKHNNTEIVYTVASYRIHKGFHMLRFEGINNINEIEHLKGDYIYQERDHQDIELGEHEYYYSDIIGCTVFKDDDTPIGRVINIFETGANDVWVVKGEKEYLIPYIEDVVKDIDIETKTIKITPMEGLLD.

Positions 94–165 constitute a PRC barrel domain; sequence EHEYYYSDII…TIKITPMEGL (72 aa).

Belongs to the RimM family. In terms of assembly, binds ribosomal protein uS19.

The protein localises to the cytoplasm. An accessory protein needed during the final step in the assembly of 30S ribosomal subunit, possibly for assembly of the head region. Essential for efficient processing of 16S rRNA. May be needed both before and after RbfA during the maturation of 16S rRNA. It has affinity for free ribosomal 30S subunits but not for 70S ribosomes. The chain is Ribosome maturation factor RimM from Staphylococcus epidermidis (strain ATCC 12228 / FDA PCI 1200).